A 455-amino-acid polypeptide reads, in one-letter code: Probable hexose phosphate transport protein (455 aa).

The next 5 helical transmembrane spans lie at 34–54 (IFYSMFIGYIFYYFTRKSFTF), 70–90 (LGIIGSTLYFSYGISKFVSGV), 113–133 (IFFGMSSSIVLFALWWGLNGW), 161–181 (VWSTSHNIGGALIPILTGFII), and 185–205 (GWRGAMYVPGILCIGMGLVLI). Residues 219–242 (PIEKYKRDPHHAHHEGKSASEGTE) form a disordered region. The next 6 helical transmembrane spans lie at 257-277 (YVLTNQWLWFLAAASFFIYIV), 302-322 (FCVSLFEIGGLFGMLVAGWLS), 331-351 (GPMNVLFSLGLLFAILGMWFS), 363-383 (LLFVIGFFLYGPQMMIGLAAA), 394-414 (ASGFTGWFAYFGATFAGYPLG), and 424-444 (GFFIALLACASIALLLFLPTW).

Belongs to the major facilitator superfamily. Organophosphate:Pi antiporter (OPA) (TC 2.A.1.4) family.

The protein resides in the cell membrane. Transport protein for sugar phosphate uptake. The protein is Probable hexose phosphate transport protein (uhpC) of Chlamydia pneumoniae (Chlamydophila pneumoniae).